We begin with the raw amino-acid sequence, 177 residues long: MTTATTNPSTYPNAMAVARYVGISASKARRVIDLVRGKSVEEALDILRWAPQQASEPVAKVIASAAANAQNNEGLDPSTLVVATIHADEGPTAKRIRPRAQGRAFRIRKRTSHITVIVESRPSREGRRGGAGESAGGARARRAQGSKAAAAKKAPASSSKKAATTTEASEEAKGGSQ.

The tract at residues 118-177 (VESRPSREGRRGGAGESAGGARARRAQGSKAAAAKKAPASSSKKAATTTEASEEAKGGSQ) is disordered. Residues 121-130 (RPSREGRRGG) are compositionally biased toward basic and acidic residues. The segment covering 145–167 (GSKAAAAKKAPASSSKKAATTTE) has biased composition (low complexity).

The protein belongs to the universal ribosomal protein uL22 family. Part of the 50S ribosomal subunit.

This protein binds specifically to 23S rRNA; its binding is stimulated by other ribosomal proteins, e.g. L4, L17, and L20. It is important during the early stages of 50S assembly. It makes multiple contacts with different domains of the 23S rRNA in the assembled 50S subunit and ribosome. In terms of biological role, the globular domain of the protein is located near the polypeptide exit tunnel on the outside of the subunit, while an extended beta-hairpin is found that lines the wall of the exit tunnel in the center of the 70S ribosome. The chain is Large ribosomal subunit protein uL22 from Mycobacterium sp. (strain KMS).